A 510-amino-acid polypeptide reads, in one-letter code: ATP synthase subunit alpha (510 aa).

169–176 (GDRQTGKT) contributes to the ATP binding site.

This sequence belongs to the ATPase alpha/beta chains family. As to quaternary structure, F-type ATPases have 2 components, CF(1) - the catalytic core - and CF(0) - the membrane proton channel. CF(1) has five subunits: alpha(3), beta(3), gamma(1), delta(1), epsilon(1). CF(0) has three main subunits: a(1), b(2) and c(9-12). The alpha and beta chains form an alternating ring which encloses part of the gamma chain. CF(1) is attached to CF(0) by a central stalk formed by the gamma and epsilon chains, while a peripheral stalk is formed by the delta and b chains.

The protein resides in the cell inner membrane. It catalyses the reaction ATP + H2O + 4 H(+)(in) = ADP + phosphate + 5 H(+)(out). In terms of biological role, produces ATP from ADP in the presence of a proton gradient across the membrane. The alpha chain is a regulatory subunit. The chain is ATP synthase subunit alpha from Nitrobacter winogradskyi (strain ATCC 25391 / DSM 10237 / CIP 104748 / NCIMB 11846 / Nb-255).